The chain runs to 231 residues: Sugar fermentation stimulation protein homolog (231 aa).

The protein belongs to the SfsA family.

In Geobacter sp. (strain M21), this protein is Sugar fermentation stimulation protein homolog.